Here is a 102-residue protein sequence, read N- to C-terminus: Large ribosomal subunit protein uL24 (102 aa).

The protein belongs to the universal ribosomal protein uL24 family. As to quaternary structure, part of the 50S ribosomal subunit.

One of two assembly initiator proteins, it binds directly to the 5'-end of the 23S rRNA, where it nucleates assembly of the 50S subunit. In terms of biological role, one of the proteins that surrounds the polypeptide exit tunnel on the outside of the subunit. The protein is Large ribosomal subunit protein uL24 of Cupriavidus necator (strain ATCC 17699 / DSM 428 / KCTC 22496 / NCIMB 10442 / H16 / Stanier 337) (Ralstonia eutropha).